The following is a 370-amino-acid chain: MDANVSARINLMRILLISGIVFVHVPYNPQWSPFLGNYGMLDWLRVFLGESLFRIGVPCLSAISGYLLFRRGLADFDYWKTLKTKARTVLLPFLIWSGSFFVVVYAIQRQGLGFGYLPDTINATPRQWLSMAFAVEATPVNLPLYFLRDLMLCILLSPLLALLVSRYPRVTLLALLAYAILPLPNGIFLKKSILFGFSAGIYASLHGVNIKMLDRFAAPIAAGFLAIAVVIAVGLYYTGPDFPLWLDMALRLTSIAGIIGSWAISELLVRTRFGEKLGRGSGLSFWIFCGHYPLLVLFWMIWNRTGLSYYPLFYFTAPFIAIAILVASHNLVRRLAPDLLAVLTGSRTGAKRMATQPPQGAQAGYSPQQR.

10 consecutive transmembrane segments (helical) span residues Ile-14 to Phe-34, Val-46 to Tyr-66, Thr-88 to Gln-108, Leu-144 to Val-164, Val-170 to Lys-190, Ile-193 to Leu-213, Phe-216 to Tyr-236, Leu-244 to Ile-264, Gly-282 to Trp-302, and Leu-307 to Ala-327. The interval Ala-350 to Arg-370 is disordered.

This sequence belongs to the acyltransferase 3 family.

It is found in the cell membrane. Its pathway is glycan metabolism; exopolysaccharide biosynthesis. Its function is as follows. Required for the succinyl modification of the seventh sugar (glucose) of the octasaccharide subunit of succinoglycan (EPS I). This Rhizobium meliloti (strain 1021) (Ensifer meliloti) protein is Succinoglycan biosynthesis protein ExoH (exoH).